The sequence spans 109 residues: Large ribosomal subunit protein uL24 (109 aa).

The segment at 85-109 is disordered; the sequence is KYGTDPKTNKKVRLSRKTNNLVGGQ.

The protein belongs to the universal ribosomal protein uL24 family. In terms of assembly, part of the 50S ribosomal subunit.

In terms of biological role, one of two assembly initiator proteins, it binds directly to the 5'-end of the 23S rRNA, where it nucleates assembly of the 50S subunit. One of the proteins that surrounds the polypeptide exit tunnel on the outside of the subunit. The chain is Large ribosomal subunit protein uL24 from Mycoplasmoides gallisepticum (strain R(low / passage 15 / clone 2)) (Mycoplasma gallisepticum).